The sequence spans 68 residues: Long neurotoxin 1 (68 aa).

Disulfide bonds link cysteine 3–cysteine 20, cysteine 13–cysteine 41, cysteine 26–cysteine 30, cysteine 45–cysteine 56, and cysteine 57–cysteine 62.

This sequence belongs to the three-finger toxin family. Long-chain subfamily. Type II alpha-neurotoxin sub-subfamily. In terms of tissue distribution, expressed by the venom gland.

The protein resides in the secreted. Binds with high affinity to muscular (alpha-1/CHRNA1) and neuronal (alpha-7/CHRNA7) nicotinic acetylcholine receptor (nAChR) and inhibits acetylcholine from binding to the receptor, thereby impairing neuromuscular and neuronal transmission. This chain is Long neurotoxin 1, found in Aspidelaps scutatus (Shield-nose snake).